The sequence spans 1404 residues: DNA-directed RNA polymerase subunit beta' (1404 aa).

Residues Cys70, Cys72, Cys85, and Cys88 each contribute to the Zn(2+) site. Mg(2+) contacts are provided by Asp460, Asp462, and Asp464. Residues Cys825, Cys899, Cys906, and Cys909 each contribute to the Zn(2+) site.

It belongs to the RNA polymerase beta' chain family. The RNAP catalytic core consists of 2 alpha, 1 beta, 1 beta' and 1 omega subunit. When a sigma factor is associated with the core the holoenzyme is formed, which can initiate transcription. The cofactor is Mg(2+). Zn(2+) is required as a cofactor.

The enzyme catalyses RNA(n) + a ribonucleoside 5'-triphosphate = RNA(n+1) + diphosphate. DNA-dependent RNA polymerase catalyzes the transcription of DNA into RNA using the four ribonucleoside triphosphates as substrates. In Nitrosomonas europaea (strain ATCC 19718 / CIP 103999 / KCTC 2705 / NBRC 14298), this protein is DNA-directed RNA polymerase subunit beta'.